A 397-amino-acid chain; its full sequence is Elongation factor Tu (397 aa).

One can recognise a tr-type G domain in the interval 10–206 (KPHVNIGTIG…AVDTYIPTPE (197 aa)). Residues 19-26 (GHVDHGKT) form a G1 region. 19–26 (GHVDHGKT) contacts GTP. T26 is a Mg(2+) binding site. Residues 60–64 (GITIN) are G2. A G3 region spans residues 81-84 (DCPG). Residues 81 to 85 (DCPGH) and 136 to 139 (NKSD) each bind GTP. Residues 136 to 139 (NKSD) are G4. The tract at residues 174 to 176 (SAL) is G5.

Belongs to the TRAFAC class translation factor GTPase superfamily. Classic translation factor GTPase family. EF-Tu/EF-1A subfamily. In terms of assembly, monomer.

Its subcellular location is the cytoplasm. The catalysed reaction is GTP + H2O = GDP + phosphate + H(+). In terms of biological role, GTP hydrolase that promotes the GTP-dependent binding of aminoacyl-tRNA to the A-site of ribosomes during protein biosynthesis. The polypeptide is Elongation factor Tu (Clostridium kluyveri (strain ATCC 8527 / DSM 555 / NBRC 12016 / NCIMB 10680 / K1)).